Reading from the N-terminus, the 149-residue chain is 5-hydroxytryptamine receptor 1E (149 aa).

The Extracellular segment spans residues 1–6 (HQPANY). A helical membrane pass occupies residues 7-31 (LICSLAVTDLLVAVLVMPLSIMYIV). Residues 32–39 (MDSWRLGY) are Cytoplasmic-facing. The chain crosses the membrane as a helical span at residues 40–65 (FICEVWLSVDMTCCTCSILHLCVIAL). Residues Cys42 and Cys120 are joined by a disulfide bond. Residues Asp49 and Cys53 each contribute to the serotonin site. The short motif at 66 to 68 (DRY) is the DRY motif; important for ligand-induced conformation changes element. Residues 66 to 85 (DRYWAITNAIEYARKRTAKR) are Extracellular-facing. The chain crosses the membrane as a helical span at residues 86–104 (AGLMILTVWTISIFISMPP). Residues 105–149 (LFWRSHRQLSPPPSQCAIQHDHVIYTIYSTLGAFYIPLTLILILY) lie on the Cytoplasmic side of the membrane.

This sequence belongs to the G-protein coupled receptor 1 family.

Its subcellular location is the cell membrane. Functionally, G-protein coupled receptor for 5-hydroxytryptamine (serotonin). Also functions as a receptor for various alkaloids and psychoactive substances. Ligand binding causes a conformation change that triggers signaling via guanine nucleotide-binding proteins (G proteins) and modulates the activity of downstream effectors, such as adenylate cyclase. HTR1E is coupled to G(i)/G(o) G alpha proteins and mediates inhibitory neurotransmission by inhibiting adenylate cyclase activity. In Sus scrofa (Pig), this protein is 5-hydroxytryptamine receptor 1E (HTR1E).